A 415-amino-acid chain; its full sequence is MGSTALGGGAPARLGLAPKDGVFGSNLKQCGGFMLKTTPKVGSSSVRVRASVASSPQKQHSPKTSGVKSGEEVRIAVLGASGYTGAEIVRLLANHPQFRIKVMTADRKAGEQFGSVFPHLITQDLPNLVAVKDADFSNVDAVFCCLPHGTTQEIIKGLPQELKIVDLSADFRLRDINEYAEWYGHSHRAPELQQEAVYGLTEVLRNEIRNARLVANPGCYPTSIQLPLVPLIKAKLIKVSNIIIDAKSGVSGAGRGAKEANLYTEIAEGIHAYGIKGHRHVPEIEQGLSEAAESKVTISFTPNLICMKRGMQSTMFVEMAPGVTANDLYQHLKSTYEGEEFVKLLNGSSVPHTRHVVGSNYCFMNVFEDRIPGRAIIISVIDNLVKGASGQAVQNLNLMMGLPENTGLQYQPLFP.

The N-terminal 74 residues, 1–74, are a transit peptide targeting the chloroplast; the sequence is MGSTALGGGA…SGVKSGEEVR (74 aa). Residues 48 to 68 are disordered; sequence VRASVASSPQKQHSPKTSGVK. Residues 56 to 67 are compositionally biased toward polar residues; it reads PQKQHSPKTSGV. C219 is an active-site residue.

It belongs to the NAGSA dehydrogenase family. Type 1 subfamily. As to quaternary structure, homotetramer.

Its subcellular location is the plastid. It is found in the chloroplast. It carries out the reaction N-acetyl-L-glutamate 5-semialdehyde + phosphate + NADP(+) = N-acetyl-L-glutamyl 5-phosphate + NADPH + H(+). Its pathway is amino-acid biosynthesis; L-arginine biosynthesis; N(2)-acetyl-L-ornithine from L-glutamate: step 3/4. The protein is Probable N-acetyl-gamma-glutamyl-phosphate reductase, chloroplastic of Oryza sativa subsp. japonica (Rice).